A 185-amino-acid polypeptide reads, in one-letter code: Ribosome-recycling factor (185 aa).

This sequence belongs to the RRF family.

The protein localises to the cytoplasm. Functionally, responsible for the release of ribosomes from messenger RNA at the termination of protein biosynthesis. May increase the efficiency of translation by recycling ribosomes from one round of translation to another. The chain is Ribosome-recycling factor from Alteromonas mediterranea (strain DSM 17117 / CIP 110805 / LMG 28347 / Deep ecotype).